Here is a 282-residue protein sequence, read N- to C-terminus: MRIDTVNVLLEALPYIKEFYGKTFVIKFGGSAMKEEKAKKAFIQDIILLKYTGIKPVIVHGGGPAISQMMKELGIEPVFKNGHRVTDERTMEIVEMVLVGKINKEIVMNINLHGGRAVGICGKDSKLIVAEKETKYGDLGFVGKVKQVNPEILHALIENDYIPVIAPVGIGEDGHSYNINADTAAAEIAKSLMAEKLILLTDVDGVLKDGKLLSTLTPEEAENLIKDGVVTGGMIPKVECAISAVREGVGAVHIINGGLEHAILLEIFSRKGIGTMIKESEG.

Substrate contacts are provided by residues glycine 62–glycine 63, arginine 84, and asparagine 178.

The protein belongs to the acetylglutamate kinase family. ArgB subfamily.

It localises to the cytoplasm. The catalysed reaction is N-acetyl-L-glutamate + ATP = N-acetyl-L-glutamyl 5-phosphate + ADP. The protein operates within amino-acid biosynthesis; L-arginine biosynthesis; N(2)-acetyl-L-ornithine from L-glutamate: step 2/4. In terms of biological role, catalyzes the ATP-dependent phosphorylation of N-acetyl-L-glutamate. In Thermotoga neapolitana (strain ATCC 49049 / DSM 4359 / NBRC 107923 / NS-E), this protein is Acetylglutamate kinase.